We begin with the raw amino-acid sequence, 682 residues long: Potassium-transporting ATPase ATP-binding subunit (682 aa).

5 helical membrane-spanning segments follow: residues 15-35 (AALFDAAVLVAAMRAAFAKLA), 42-62 (SPVMAVVMGGTVLAAVITASG), 66-86 (AGFGWAVTAILFVTVLFGNFA), 233-253 (LTFLIVVASLPAIAGFVGVTL), and 257-277 (LLIALLVCLIPTTIGGLLPAI). Aspartate 310 (4-aspartylphosphate intermediate) is an active-site residue. Residues aspartate 347, glutamate 351, 377-384 (FTAQTRMS), and lysine 395 each bind ATP. Residues aspartate 518 and aspartate 522 each contribute to the Mg(2+) site. 3 helical membrane-spanning segments follow: residues 588–608 (FAILPALFAAAIPSMAALNVM), 616–636 (AVLAALIFNALIIPALIPLAL), and 662–682 (VLLPFAAIKAIDLALVAVLGA).

It belongs to the cation transport ATPase (P-type) (TC 3.A.3) family. Type IA subfamily. In terms of assembly, the system is composed of three essential subunits: KdpA, KdpB and KdpC.

The protein resides in the cell inner membrane. It catalyses the reaction K(+)(out) + ATP + H2O = K(+)(in) + ADP + phosphate + H(+). Its function is as follows. Part of the high-affinity ATP-driven potassium transport (or Kdp) system, which catalyzes the hydrolysis of ATP coupled with the electrogenic transport of potassium into the cytoplasm. This subunit is responsible for energy coupling to the transport system and for the release of the potassium ions to the cytoplasm. The sequence is that of Potassium-transporting ATPase ATP-binding subunit from Xanthomonas axonopodis pv. citri (strain 306).